We begin with the raw amino-acid sequence, 263 residues long: Purine nucleoside phosphorylase SACOL1200 (263 aa).

Zn(2+)-binding residues include His79, Cys124, and His141.

The protein belongs to the purine nucleoside phosphorylase YfiH/LACC1 family. Homodimer. The cofactor is Cu(2+). Requires Zn(2+) as cofactor.

It carries out the reaction adenosine + phosphate = alpha-D-ribose 1-phosphate + adenine. The enzyme catalyses S-methyl-5'-thioadenosine + phosphate = 5-(methylsulfanyl)-alpha-D-ribose 1-phosphate + adenine. It catalyses the reaction inosine + phosphate = alpha-D-ribose 1-phosphate + hypoxanthine. The catalysed reaction is adenosine + H2O + H(+) = inosine + NH4(+). In terms of biological role, purine nucleoside enzyme that catalyzes the phosphorolysis of adenosine and inosine nucleosides, yielding D-ribose 1-phosphate and the respective free bases, adenine and hypoxanthine. Also catalyzes the phosphorolysis of S-methyl-5'-thioadenosine into adenine and S-methyl-5-thio-alpha-D-ribose 1-phosphate. Also has adenosine deaminase activity. This chain is Purine nucleoside phosphorylase SACOL1200, found in Staphylococcus aureus (strain COL).